The following is a 454-amino-acid chain: Putative serine/threonine-protein phosphatase C27B7.6 (454 aa).

Residues Asp-65, His-67, Asp-93, and Asn-125 each coordinate Mn(2+). Residue His-126 is the Proton donor of the active site. Mn(2+)-binding residues include His-174 and His-252. Residues Arg-414–Ala-454 are disordered. Over residues Thr-424–Pro-447 the composition is skewed to pro residues.

Belongs to the PPP phosphatase family. PP-1 subfamily. Mn(2+) serves as cofactor.

The enzyme catalyses O-phospho-L-seryl-[protein] + H2O = L-seryl-[protein] + phosphate. It carries out the reaction O-phospho-L-threonyl-[protein] + H2O = L-threonyl-[protein] + phosphate. In Caenorhabditis elegans, this protein is Putative serine/threonine-protein phosphatase C27B7.6.